The sequence spans 31 residues: Cytochrome b6-f complex subunit 6 (31 aa).

Residues 4-24 (ITSYFGFLLAVLIITSSLFIG) traverse the membrane as a helical segment.

This sequence belongs to the PetL family. The 4 large subunits of the cytochrome b6-f complex are cytochrome b6, subunit IV (17 kDa polypeptide, PetD), cytochrome f and the Rieske protein, while the 4 small subunits are PetG, PetL, PetM and PetN. The complex functions as a dimer.

The protein resides in the plastid. The protein localises to the chloroplast thylakoid membrane. In terms of biological role, component of the cytochrome b6-f complex, which mediates electron transfer between photosystem II (PSII) and photosystem I (PSI), cyclic electron flow around PSI, and state transitions. PetL is important for photoautotrophic growth as well as for electron transfer efficiency and stability of the cytochrome b6-f complex. The protein is Cytochrome b6-f complex subunit 6 of Phaseolus vulgaris (Kidney bean).